The following is a 195-amino-acid chain: Peptide methionine sulfoxide reductase MsrA 2 (195 aa).

Cys-18 is a catalytic residue.

This sequence belongs to the MsrA Met sulfoxide reductase family.

It carries out the reaction L-methionyl-[protein] + [thioredoxin]-disulfide + H2O = L-methionyl-(S)-S-oxide-[protein] + [thioredoxin]-dithiol. The catalysed reaction is [thioredoxin]-disulfide + L-methionine + H2O = L-methionine (S)-S-oxide + [thioredoxin]-dithiol. Its function is as follows. Has an important function as a repair enzyme for proteins that have been inactivated by oxidation. Catalyzes the reversible oxidation-reduction of methionine sulfoxide in proteins to methionine. The sequence is that of Peptide methionine sulfoxide reductase MsrA 2 (msrA2) from Mesorhizobium japonicum (strain LMG 29417 / CECT 9101 / MAFF 303099) (Mesorhizobium loti (strain MAFF 303099)).